Here is a 567-residue protein sequence, read N- to C-terminus: Proline--tRNA ligase (567 aa).

The protein belongs to the class-II aminoacyl-tRNA synthetase family. ProS type 1 subfamily. Homodimer.

It localises to the cytoplasm. It catalyses the reaction tRNA(Pro) + L-proline + ATP = L-prolyl-tRNA(Pro) + AMP + diphosphate. Catalyzes the attachment of proline to tRNA(Pro) in a two-step reaction: proline is first activated by ATP to form Pro-AMP and then transferred to the acceptor end of tRNA(Pro). As ProRS can inadvertently accommodate and process non-cognate amino acids such as alanine and cysteine, to avoid such errors it has two additional distinct editing activities against alanine. One activity is designated as 'pretransfer' editing and involves the tRNA(Pro)-independent hydrolysis of activated Ala-AMP. The other activity is designated 'posttransfer' editing and involves deacylation of mischarged Ala-tRNA(Pro). The misacylated Cys-tRNA(Pro) is not edited by ProRS. This Geobacillus kaustophilus (strain HTA426) protein is Proline--tRNA ligase.